A 72-amino-acid polypeptide reads, in one-letter code: Translation initiation factor IF-1 (72 aa).

The S1-like domain maps to 1–72; that stretch reads MAKEDCIEMQ…SKARIIFRAR (72 aa).

This sequence belongs to the IF-1 family. In terms of assembly, component of the 30S ribosomal translation pre-initiation complex which assembles on the 30S ribosome in the order IF-2 and IF-3, IF-1 and N-formylmethionyl-tRNA(fMet); mRNA recruitment can occur at any time during PIC assembly.

The protein resides in the cytoplasm. In terms of biological role, one of the essential components for the initiation of protein synthesis. Stabilizes the binding of IF-2 and IF-3 on the 30S subunit to which N-formylmethionyl-tRNA(fMet) subsequently binds. Helps modulate mRNA selection, yielding the 30S pre-initiation complex (PIC). Upon addition of the 50S ribosomal subunit IF-1, IF-2 and IF-3 are released leaving the mature 70S translation initiation complex. This is Translation initiation factor IF-1 from Haemophilus ducreyi (strain 35000HP / ATCC 700724).